We begin with the raw amino-acid sequence, 110 residues long: Inner membrane protein H108R (110 aa).

Residues 10–32 (LIVIITILITTRELSTTMLIVSL) traverse the membrane as a helical segment.

This sequence belongs to the asfivirus H108R family.

It localises to the virion membrane. The chain is Inner membrane protein H108R from African swine fever virus (isolate Pig/Kenya/KEN-50/1950) (ASFV).